The chain runs to 152 residues: Superoxide dismutase [Cu-Zn] 2 (152 aa).

Residues asparagine 9 and asparagine 33 are each glycosylated (N-linked (GlcNAc...) asparagine). Residues histidine 45, histidine 47, and histidine 62 each contribute to the Cu cation site. A disulfide bond links cysteine 56 and cysteine 145. Residues histidine 62, histidine 70, histidine 79, and aspartate 82 each contribute to the Zn(2+) site. The N-linked (GlcNAc...) asparagine glycan is linked to asparagine 85. Histidine 119 lines the Cu cation pocket.

The protein belongs to the Cu-Zn superoxide dismutase family. Cu cation serves as cofactor. Zn(2+) is required as a cofactor. In terms of tissue distribution, expressed in fruits, leaves and pollen grains.

It is found in the cytoplasm. Its subcellular location is the endoplasmic reticulum. It carries out the reaction 2 superoxide + 2 H(+) = H2O2 + O2. With respect to regulation, inhibited by KCN and H(2)O(2). Destroys radicals which are normally produced within the cells and which are toxic to biological systems. Probably involved in the protection against oxidative stress during pollen development. This is Superoxide dismutase [Cu-Zn] 2 (OLE5) from Olea europaea (Common olive).